Reading from the N-terminus, the 188-residue chain is UPF0314 protein Sala_3154 (188 aa).

Transmembrane regions (helical) follow at residues 8–28, 57–77, and 143–163; these read TGWLVAAALVALLAAILIFMG, WYSFSHIIHGFIFYGVLRWIM, and MRWWVTAALAIAFELFTLWTI.

Belongs to the UPF0314 family.

Its subcellular location is the cell membrane. The sequence is that of UPF0314 protein Sala_3154 from Sphingopyxis alaskensis (strain DSM 13593 / LMG 18877 / RB2256) (Sphingomonas alaskensis).